Here is a 392-residue protein sequence, read N- to C-terminus: Putative nickel insertion protein (392 aa).

Belongs to the LarC family.

This Pelobacter propionicus (strain DSM 2379 / NBRC 103807 / OttBd1) protein is Putative nickel insertion protein.